Consider the following 122-residue polypeptide: Allatotropin (122 aa).

The N-terminal stretch at 1 to 23 (MRVILAITLLFVAGSFIATASKG) is a signal peptide. Residues 24–40 (RNYPRFFKHRMKLREIR) constitute a propeptide that is removed on maturation. Phe53 carries the phenylalanine amide modification. Positions 57–122 (ESPAERIPDL…GDDSKKGTIA (66 aa)) are excised as a propeptide.

In terms of tissue distribution, expressed in brain and ventral ganglia but not in the retrocerebral complex (at protein level).

It localises to the secreted. Its function is as follows. Neuropeptide stimulator of juvenile hormone synthesis. This is Allatotropin from Camponotus floridanus (Florida carpenter ant).